Reading from the N-terminus, the 855-residue chain is Suppressor of tumorigenicity 14 protein homolog (855 aa).

Over 1 to 55 (MGSNRGRKAGGGSQDFGAGLKYNSRLENMNGFEEGVEFLPANNAKKVEKRGPRRW) the chain is Cytoplasmic. At Ser13 the chain carries Phosphoserine. The helical; Signal-anchor for type II membrane protein transmembrane segment at 56–76 (VVLVAVLFSFLLLSLMAGLLV) threads the bilayer. Topologically, residues 77 to 855 (WHFHYRNVRV…RDWIKEHTGV (779 aa)) are extracellular. Residues 86–203 (VQKVFNGHLR…TSVVAFPIDP (118 aa)) enclose the SEA domain. Residue Asn107 is glycosylated (N-linked (GlcNAc...) asparagine). A disulfide bridge connects residues Cys214 and Cys244. CUB domains follow at residues 214 to 331 (CSFA…EATF) and 340 to 444 (CGGF…LAEY). N-linked (GlcNAc...) asparagine glycosylation is found at Asn302 and Asn365. 2 cysteine pairs are disulfide-bonded: Cys340–Cys366 and Cys397–Cys410. Asn421 carries an N-linked (GlcNAc...) asparagine glycan. LDL-receptor class A domains lie at 451–488 (DPCPGMFMCKTGRCIRKELRCDGWADCPDYSDERYCRC), 489–522 (NATHQFTCKNQFCKPLFWVCDSVNDCGDGSDEEG), 523–561 (CSCPAGSFKCSNGKCLPQSQKCNGKDNCGDGSDEASCDS), and 565–604 (VSCTKYTYRCQNGLCLSKGNPECDGKTDCSDGSDEKNCDC). Intrachain disulfides connect Cys453–Cys464, Cys459–Cys477, Cys471–Cys486, Cys488–Cys501, Cys496–Cys514, Cys508–Cys523, Cys525–Cys537, Cys532–Cys550, Cys544–Cys559, Cys567–Cys579, Cys574–Cys593, Cys587–Cys602, and Cys641–Cys657. Asn489 carries an N-linked (GlcNAc...) asparagine glycan. The Peptidase S1 domain maps to 615–854 (VVGGTNADEG…VRDWIKEHTG (240 aa)). Active-site charge relay system residues include His656 and Asp711. Residue Asn772 is glycosylated (N-linked (GlcNAc...) asparagine). 2 disulfides stabilise this stretch: Cys776–Cys790 and Cys801–Cys830. The active-site Charge relay system is Ser805.

Belongs to the peptidase S1 family. In terms of assembly, interacts with CDCP1. May interact with TMEFF1. As to expression, highly expressed in intestine, kidney, lung, and thymus. Not expressed in skeletal muscle, liver, heart, testis and brain.

It localises to the membrane. It carries out the reaction Cleaves various synthetic substrates with Arg or Lys at the P1 position and prefers small side-chain amino acids, such as Ala and Gly, at the P2 position.. Functionally, exhibits trypsin-like activity as defined by cleavage of synthetic substrates with Arg or Lys as the P1 site. Involved in the terminal differentiation of keratinocytes through prostasin (PRSS8) activation and filaggrin (FLG) processing. Proteolytically cleaves and therefore activates TMPRSS13. The polypeptide is Suppressor of tumorigenicity 14 protein homolog (St14) (Mus musculus (Mouse)).